The chain runs to 480 residues: Ribosomal protein uS12 methylthiotransferase RimO (480 aa).

The MTTase N-terminal domain maps to 37–147 (NRIGFVSLGC…VLKHVHKYVP (111 aa)). [4Fe-4S] cluster is bound by residues C46, C82, C111, C179, C183, and C186. Residues 165-402 (LTPKHYAYLK…MEVQAEISAE (238 aa)) form the Radical SAM core domain. A TRAM domain is found at 405 to 471 (ARFVGRTMDI…EHDLWAELVD (67 aa)).

The protein belongs to the methylthiotransferase family. RimO subfamily. [4Fe-4S] cluster serves as cofactor.

The protein localises to the cytoplasm. The enzyme catalyses L-aspartate(89)-[ribosomal protein uS12]-hydrogen + (sulfur carrier)-SH + AH2 + 2 S-adenosyl-L-methionine = 3-methylsulfanyl-L-aspartate(89)-[ribosomal protein uS12]-hydrogen + (sulfur carrier)-H + 5'-deoxyadenosine + L-methionine + A + S-adenosyl-L-homocysteine + 2 H(+). Catalyzes the methylthiolation of an aspartic acid residue of ribosomal protein uS12. This Shewanella sp. (strain ANA-3) protein is Ribosomal protein uS12 methylthiotransferase RimO.